Consider the following 265-residue polypeptide: Glutamate racemase (265 aa).

Substrate-binding positions include 10–11 and 42–43; these read DS and YG. The active-site Proton donor/acceptor is the Cys-73. 74–75 contacts substrate; it reads NT. Cys-183 serves as the catalytic Proton donor/acceptor. 184-185 is a substrate binding site; it reads TH.

It belongs to the aspartate/glutamate racemases family.

The enzyme catalyses L-glutamate = D-glutamate. It functions in the pathway cell wall biogenesis; peptidoglycan biosynthesis. Functionally, provides the (R)-glutamate required for cell wall biosynthesis. This is Glutamate racemase from Corynebacterium diphtheriae (strain ATCC 700971 / NCTC 13129 / Biotype gravis).